Here is a 347-residue protein sequence, read N- to C-terminus: Probable E3 ubiquitin-protein ligase DTX3 (347 aa).

The segment at Gly111–Ala157 is disordered. A compositionally biased stretch (pro residues) spans Pro120–Pro151. The RING-type zinc finger occupies Cys164 to Phe205.

This sequence belongs to the Deltex family. In terms of assembly, homodimer. May form a heterodimer with other members of the Deltex family. Interacts with NOTCH1. Strongly expressed in testis and brain. Weakly expressed in kidney.

The protein resides in the cytoplasm. The catalysed reaction is S-ubiquitinyl-[E2 ubiquitin-conjugating enzyme]-L-cysteine + [acceptor protein]-L-lysine = [E2 ubiquitin-conjugating enzyme]-L-cysteine + N(6)-ubiquitinyl-[acceptor protein]-L-lysine.. It functions in the pathway protein modification; protein ubiquitination. Regulator of Notch signaling, a signaling pathway involved in cell-cell communications that regulates a broad spectrum of cell-fate determinations. Probably acts both as a positive and negative regulator of Notch, depending on the developmental and cell context. Functions as a ubiquitin ligase protein in vitro, suggesting that it may regulate the Notch pathway via some ubiquitin ligase activity. The sequence is that of Probable E3 ubiquitin-protein ligase DTX3 (Dtx3) from Mus musculus (Mouse).